The following is a 134-amino-acid chain: ATP synthase epsilon chain (134 aa).

The protein belongs to the ATPase epsilon chain family. As to quaternary structure, F-type ATPases have 2 components, CF(1) - the catalytic core - and CF(0) - the membrane proton channel. CF(1) has five subunits: alpha(3), beta(3), gamma(1), delta(1), epsilon(1). CF(0) has three main subunits: a, b and c.

Its subcellular location is the cell membrane. In terms of biological role, produces ATP from ADP in the presence of a proton gradient across the membrane. The protein is ATP synthase epsilon chain of Alkaliphilus metalliredigens (strain QYMF).